The following is a 504-amino-acid chain: Apolipoprotein N-acyltransferase (504 aa).

6 helical membrane-spanning segments follow: residues 6-26 (LALTGGILLPFAFAPFGYALV), 47-67 (ALYGYLFGLGQFGIGVSWVFV), 83-103 (LTALFVAYLALFPALAGWLGV), 105-125 (AGGGSILVRTLLVFPAAWVVT), 153-173 (IAPVFGVFGVGWLLAVLAGLL), and 186-206 (FALLGAAVVLVGSTQFAKVQW). The 239-residue stretch at 219 to 457 (LQGNVPQDQK…REALTGMMQP (239 aa)) folds into the CN hydrolase domain. The active-site Proton acceptor is E258. K317 is a catalytic residue. Catalysis depends on C369, which acts as the Nucleophile. A helical membrane pass occupies residues 465–485 (ALWGDWPAIGLCAGIVGICFA).

This sequence belongs to the CN hydrolase family. Apolipoprotein N-acyltransferase subfamily.

The protein resides in the cell inner membrane. It catalyses the reaction N-terminal S-1,2-diacyl-sn-glyceryl-L-cysteinyl-[lipoprotein] + a glycerophospholipid = N-acyl-S-1,2-diacyl-sn-glyceryl-L-cysteinyl-[lipoprotein] + a 2-acyl-sn-glycero-3-phospholipid + H(+). Its pathway is protein modification; lipoprotein biosynthesis (N-acyl transfer). Catalyzes the phospholipid dependent N-acylation of the N-terminal cysteine of apolipoprotein, the last step in lipoprotein maturation. The chain is Apolipoprotein N-acyltransferase from Methylococcus capsulatus (strain ATCC 33009 / NCIMB 11132 / Bath).